We begin with the raw amino-acid sequence, 113 residues long: Large ribosomal subunit protein bL17 (113 aa).

The protein belongs to the bacterial ribosomal protein bL17 family. Part of the 50S ribosomal subunit. Contacts protein L32.

The sequence is that of Large ribosomal subunit protein bL17 from Clostridium tetani (strain Massachusetts / E88).